A 179-amino-acid chain; its full sequence is MLKVEERYTNAVPELQKAFKYENIMQVPKLVKVVINTGVGEAVSNSKALETAEADIVAIAGQHPVITRAKRSVANFKLRAGMPIGLKVTLRGQRMYDFLNKLFFITLPRVRDFQGVSNTAFDEHGNYTLGFKDHSVFPEIDFNKIEKPRGLEVCIVTTANTPEEGKKLLELLGMPFSKD.

This sequence belongs to the universal ribosomal protein uL5 family. Part of the 50S ribosomal subunit; part of the 5S rRNA/L5/L18/L25 subcomplex. Contacts the 5S rRNA and the P site tRNA. Forms a bridge to the 30S subunit in the 70S ribosome.

This is one of the proteins that bind and probably mediate the attachment of the 5S RNA into the large ribosomal subunit, where it forms part of the central protuberance. In the 70S ribosome it contacts protein S13 of the 30S subunit (bridge B1b), connecting the 2 subunits; this bridge is implicated in subunit movement. Contacts the P site tRNA; the 5S rRNA and some of its associated proteins might help stabilize positioning of ribosome-bound tRNAs. The polypeptide is Large ribosomal subunit protein uL5 (Dehalococcoides mccartyi (strain ATCC BAA-2266 / KCTC 15142 / 195) (Dehalococcoides ethenogenes (strain 195))).